Here is a 34-residue protein sequence, read N- to C-terminus: Non-toxic venom protein (34 aa).

An LCN-type CS-alpha/beta domain is found at Lys-1–Asp-34.

As to expression, expressed by the venom gland.

Its subcellular location is the secreted. In terms of biological role, does not cause symptoms of intoxication, paralysis or death in insects (A.domestica). The protein is Non-toxic venom protein of Rhopalurus junceus (Caribbean blue scorpion).